A 219-amino-acid polypeptide reads, in one-letter code: RNA-free ribonuclease P (219 aa).

The protein belongs to the HARP family.

The catalysed reaction is Endonucleolytic cleavage of RNA, removing 5'-extranucleotides from tRNA precursor.. RNA-free RNase P that catalyzes the removal of the 5'-leader sequence from pre-tRNA to produce the mature 5'-terminus. The chain is RNA-free ribonuclease P from Staphylothermus marinus (strain ATCC 43588 / DSM 3639 / JCM 9404 / F1).